The chain runs to 358 residues: Holliday junction branch migration complex subunit RuvB (358 aa).

Positions 1–24 (MAIKRSHNSPPATEENLLTPNPTI) are disordered. Residues 8–22 (NSPPATEENLLTPNP) are compositionally biased toward polar residues. Positions 13–195 (TEENLLTPNP…FGLIQRLRFY (183 aa)) are large ATPase domain (RuvB-L). Residues Ile34, Arg35, Gly76, Lys79, Thr80, Thr81, 142–144 (EDY), Arg185, Tyr195, and Arg232 contribute to the ATP site. Thr80 is a binding site for Mg(2+). Residues 196–266 (AVEELTAIIL…LAAEGLNQLN (71 aa)) form a small ATPAse domain (RuvB-S) region. Positions 269 to 358 (SMGLDWTDRL…KDRSLPLFEF (90 aa)) are head domain (RuvB-H). DNA is bound by residues Arg324 and Arg329.

It belongs to the RuvB family. In terms of assembly, homohexamer. Forms an RuvA(8)-RuvB(12)-Holliday junction (HJ) complex. HJ DNA is sandwiched between 2 RuvA tetramers; dsDNA enters through RuvA and exits via RuvB. An RuvB hexamer assembles on each DNA strand where it exits the tetramer. Each RuvB hexamer is contacted by two RuvA subunits (via domain III) on 2 adjacent RuvB subunits; this complex drives branch migration. In the full resolvosome a probable DNA-RuvA(4)-RuvB(12)-RuvC(2) complex forms which resolves the HJ.

It localises to the cytoplasm. The enzyme catalyses ATP + H2O = ADP + phosphate + H(+). Functionally, the RuvA-RuvB-RuvC complex processes Holliday junction (HJ) DNA during genetic recombination and DNA repair, while the RuvA-RuvB complex plays an important role in the rescue of blocked DNA replication forks via replication fork reversal (RFR). RuvA specifically binds to HJ cruciform DNA, conferring on it an open structure. The RuvB hexamer acts as an ATP-dependent pump, pulling dsDNA into and through the RuvAB complex. RuvB forms 2 homohexamers on either side of HJ DNA bound by 1 or 2 RuvA tetramers; 4 subunits per hexamer contact DNA at a time. Coordinated motions by a converter formed by DNA-disengaged RuvB subunits stimulates ATP hydrolysis and nucleotide exchange. Immobilization of the converter enables RuvB to convert the ATP-contained energy into a lever motion, pulling 2 nucleotides of DNA out of the RuvA tetramer per ATP hydrolyzed, thus driving DNA branch migration. The RuvB motors rotate together with the DNA substrate, which together with the progressing nucleotide cycle form the mechanistic basis for DNA recombination by continuous HJ branch migration. Branch migration allows RuvC to scan DNA until it finds its consensus sequence, where it cleaves and resolves cruciform DNA. This chain is Holliday junction branch migration complex subunit RuvB, found in Microcystis aeruginosa (strain NIES-843 / IAM M-2473).